The following is a 377-amino-acid chain: dTDP-fucopyranose mutase (377 aa).

FAD contacts are provided by residues Ser12, 31 to 32, Asn39, 58 to 59, Arg348, and 355 to 360; these read DD, HI, and LDMDVC.

Belongs to the UDP-galactopyranose/dTDP-fucopyranose mutase family. FAD is required as a cofactor.

It catalyses the reaction dTDP-alpha-D-fucose = dTDP-alpha-D-fucofuranose. The protein operates within bacterial outer membrane biogenesis; LPS O-antigen biosynthesis. Its activity is regulated as follows. Inhibited by Cu(2+), while other divalent cations such as Ca(2+), Co(2+), Fe(2+) and Mg(2+) have no obvious effects on enzyme activity. Functionally, catalyzes the conversion of dTDP-alpha-D-fucopyranose to dTDP-alpha-D-fucofuranose. This is a step in the biosynthesis of D-fucofuranose, a component of E.coli O52 O antigen. The protein is dTDP-fucopyranose mutase (fcf2) of Escherichia coli.